A 137-amino-acid polypeptide reads, in one-letter code: Early nodulin-55-1 (137 aa).

A Phytocyanin domain is found at 1–67 (KYDERTESVH…GLKLMVVVMS (67 aa)). 3 N-linked (GlcNAc...) asparagine glycosylation sites follow: N13, N51, and N68. C20 and C55 form a disulfide bridge. The interval 70-115 (TKKKLIHSPSPSSPSPSPSPSPSPSPSPSPSLSSPSPSPLPNNQGV) is disordered. The span at 80–98 (PSSPSPSPSPSPSPSPSPS) shows a compositional bias: pro residues.

Belongs to the early nodulin-like (ENODL) family.

The protein resides in the symbiosome. It is found in the peribacteroid membrane. In terms of biological role, may act as a carbohydrate transporter. In Glycine max (Soybean), this protein is Early nodulin-55-1.